The sequence spans 195 residues: MNYLVFKVIYANANVVIGEHNFIGYQIRVPKDYELEVNKFCKLYLYEYASIMPNKNLIIKDLYGFRTYNERLLFIDLISINSIGPKTAINILKYDINLIIDAIATKDVDFLATIKGVNQRSANLICDQLNYKYINKVSEKNPWAKELSIGLENLGYDKKDIEYAITKVKVDTQQNIDISEIIGCAIKEISLRHEN.

The tract at residues 1–66 (MNYLVFKVIY…LIIKDLYGFR (66 aa)) is domain I. The domain II stretch occupies residues 67 to 141 (TYNERLLFID…KYINKVSEKN (75 aa)). Asparagine 141 is a region of interest (flexible linker). The tract at residues 141-195 (NPWAKELSIGLENLGYDKKDIEYAITKVKVDTQQNIDISEIIGCAIKEISLRHEN) is domain III.

Belongs to the RuvA family. Homotetramer. Forms an RuvA(8)-RuvB(12)-Holliday junction (HJ) complex. HJ DNA is sandwiched between 2 RuvA tetramers; dsDNA enters through RuvA and exits via RuvB. An RuvB hexamer assembles on each DNA strand where it exits the tetramer. Each RuvB hexamer is contacted by two RuvA subunits (via domain III) on 2 adjacent RuvB subunits; this complex drives branch migration. In the full resolvosome a probable DNA-RuvA(4)-RuvB(12)-RuvC(2) complex forms which resolves the HJ.

It is found in the cytoplasm. Its function is as follows. The RuvA-RuvB-RuvC complex processes Holliday junction (HJ) DNA during genetic recombination and DNA repair, while the RuvA-RuvB complex plays an important role in the rescue of blocked DNA replication forks via replication fork reversal (RFR). RuvA specifically binds to HJ cruciform DNA, conferring on it an open structure. The RuvB hexamer acts as an ATP-dependent pump, pulling dsDNA into and through the RuvAB complex. HJ branch migration allows RuvC to scan DNA until it finds its consensus sequence, where it cleaves and resolves the cruciform DNA. This Ureaplasma urealyticum serovar 10 (strain ATCC 33699 / Western) protein is Holliday junction branch migration complex subunit RuvA.